Reading from the N-terminus, the 358-residue chain is G-protein coupled receptor 20 (358 aa).

Residues 1-48 (MPSVSPAGPSAGAVPNATAVTTVRTNASGLEVPLFHLFARLDEELHGT) are Extracellular-facing. N-linked (GlcNAc...) asparagine glycosylation is found at N16 and N26. The helical transmembrane segment at 49 to 69 (FPGLWLALMAVHGAIFLAGLV) threads the bilayer. Topologically, residues 70–86 (LNGLALYVFCCRTRAKT) are cytoplasmic. The helical transmembrane segment at 87–107 (PSVIYTINLVVTDLLVGLSLP) threads the bilayer. Residues 108–125 (TRFAVYYGARGCLRCAFP) lie on the Extracellular side of the membrane. The helical transmembrane segment at 126 to 146 (HVLGYFLNMHCSILFLTCICV) threads the bilayer. The Cytoplasmic segment spans residues 147–168 (DRYLAIVRPEGSRRCRQPACAR). The chain crosses the membrane as a helical span at residues 169 to 189 (AVCAFVWLAAGAVTLSVLGVT). Over 190 to 196 (GSRPCCR) the chain is Extracellular. The chain crosses the membrane as a helical span at residues 197 to 217 (VFALTVLEFLLPLLVISVFTG). Residues 218 to 238 (RIMCALSRPGLLHQGRQRRVR) are Cytoplasmic-facing. The helical transmembrane segment at 239–259 (AMQLLLTVLIIFLVCFTPFHA) threads the bilayer. Over 260-275 (RQVAVALWPDMPHHTS) the chain is Extracellular. The chain crosses the membrane as a helical span at residues 276 to 296 (LVVYHVAVTLSSLNSCMDPIV). Topologically, residues 297-358 (YCFVTSGFQA…TQALANGPEA (62 aa)) are cytoplasmic. The interval 315 to 339 (HGEREPSSGDVVSMHRSSKGSGRHH) is disordered. The span at 330–339 (RSSKGSGRHH) shows a compositional bias: basic residues.

Belongs to the G-protein coupled receptor 1 family. Ubiquitous with highest levels in intestinal tissues. In the brain detected in thalamus, putamen, and caudate, but not in frontal cortex, pons and hypothalamus.

Its subcellular location is the cell membrane. Functionally, orphan receptor with constitutive G(i) signaling activity that activate cyclic AMP. The polypeptide is G-protein coupled receptor 20 (GPR20) (Homo sapiens (Human)).